The primary structure comprises 501 residues: Type II methyltransferase M.BsuBI (501 aa).

This sequence belongs to the N(4)/N(6)-methyltransferase family.

It carries out the reaction a 2'-deoxyadenosine in DNA + S-adenosyl-L-methionine = an N(6)-methyl-2'-deoxyadenosine in DNA + S-adenosyl-L-homocysteine + H(+). Functionally, a beta subtype methylase that recognizes the double-stranded sequence 5'-CTGCAG-3', methylates A-5 on both strands, and protects the DNA from cleavage by the BsuBI endonuclease. The polypeptide is Type II methyltransferase M.BsuBI (hsdBM) (Bacillus subtilis).